The following is a 380-amino-acid chain: Chaperone protein DnaJ (380 aa).

The 65-residue stretch at 5-69 folds into the J domain; that stretch reads DYYEILGVSK…QKRAHYDQFG (65 aa). A CR-type zinc finger spans residues 135–217; sequence GKETDIEIPR…CGGTGRVKKR (83 aa). Residues C148, C151, C165, C168, C191, C194, C205, and C208 each coordinate Zn(2+). CXXCXGXG motif repeat units follow at residues 148-155, 165-172, 191-198, and 205-212; these read CDTCHGTG, CSYCHGTG, CPYCGGTG, and CTTCGGTG.

The protein belongs to the DnaJ family. Homodimer. Zn(2+) is required as a cofactor.

Its subcellular location is the cytoplasm. Functionally, participates actively in the response to hyperosmotic and heat shock by preventing the aggregation of stress-denatured proteins and by disaggregating proteins, also in an autonomous, DnaK-independent fashion. Unfolded proteins bind initially to DnaJ; upon interaction with the DnaJ-bound protein, DnaK hydrolyzes its bound ATP, resulting in the formation of a stable complex. GrpE releases ADP from DnaK; ATP binding to DnaK triggers the release of the substrate protein, thus completing the reaction cycle. Several rounds of ATP-dependent interactions between DnaJ, DnaK and GrpE are required for fully efficient folding. Also involved, together with DnaK and GrpE, in the DNA replication of plasmids through activation of initiation proteins. The sequence is that of Chaperone protein DnaJ from Geobacillus sp. (strain WCH70).